Consider the following 183-residue polypeptide: Small ribosomal subunit protein uS4c (183 aa).

An S4 RNA-binding domain is found at Met82–Asn143.

Belongs to the universal ribosomal protein uS4 family. Part of the 30S ribosomal subunit. Contacts protein S5. The interaction surface between S4 and S5 is involved in control of translational fidelity.

Its subcellular location is the plastid. The protein localises to the chloroplast. One of the primary rRNA binding proteins, it binds directly to 16S rRNA where it nucleates assembly of the body of the 30S subunit. Its function is as follows. With S5 and S12 plays an important role in translational accuracy. The protein is Small ribosomal subunit protein uS4c (rps4) of Aristea capitata.